Reading from the N-terminus, the 106-residue chain is Glutaredoxin-1 (106 aa).

A1 carries the post-translational modification N-acetylalanine. One can recognise a Glutaredoxin domain in the interval 2-105; sequence QEFVNSKIQP…ARLKEMGALR (104 aa). N6-succinyllysine is present on K8. 2 disulfides stabilise this stretch: C22/C25 and C78/C82.

This sequence belongs to the glutaredoxin family.

Its subcellular location is the cytoplasm. Its function is as follows. Has a glutathione-disulfide oxidoreductase activity in the presence of NADPH and glutathione reductase. Reduces low molecular weight disulfides and proteins. The sequence is that of Glutaredoxin-1 (GLRX) from Oryctolagus cuniculus (Rabbit).